The chain runs to 308 residues: S-crystallin SL18 (308 aa).

The GST N-terminal domain occupies 2–80 (PKYTLYYFNS…YLARQFGFYG (79 aa)). Residues 165–205 (EMRSQDSMVEPPSQKLSPELESQSSLCSERPQCGPPDPMMG) form a disordered region. The span at 178–191 (QKLSPELESQSSLC) shows a compositional bias: polar residues. In terms of domain architecture, GST C-terminal spans 185 to 308 (ESQSSLCSER…YFTLRNYTDF (124 aa)).

The protein belongs to the GST superfamily. As to expression, lens.

Its function is as follows. S-crystallins are structural components of squids and octopi eye lens. Contains relatively little if any GST activity. The polypeptide is S-crystallin SL18 (Nototodarus sloanii (Wellington flying squid)).